Here is a 199-residue protein sequence, read N- to C-terminus: Small ribosomal subunit protein uS4B (199 aa).

Residues 88–151 enclose the S4 RNA-binding domain; that stretch reads CRLDNLVYRT…RKNKIFIDNF (64 aa).

It belongs to the universal ribosomal protein uS4 family. In terms of assembly, part of the 30S ribosomal subunit. Contacts protein S5. The interaction surface between S4 and S5 is involved in control of translational fidelity.

In terms of biological role, one of the primary rRNA binding proteins, it binds directly to 16S rRNA where it nucleates assembly of the body of the 30S subunit. With S5 and S12 plays an important role in translational accuracy. This is Small ribosomal subunit protein uS4B from Alkaliphilus metalliredigens (strain QYMF).